Consider the following 297-residue polypeptide: Retroviral cyclin (297 aa).

The region spanning 21–113 is the Cyclin N-terminal domain; it reads PVYWKELLNW…KPSLLLTETM (93 aa). The segment at 21–113 is transcription activation domain; sequence PVYWKELLNW…KPSLLLTETM (93 aa). The stretch at 222 to 270 forms a coiled coil; that stretch reads QINLDFAEAEQREAAERRALLEREREQQLQEARERLDDVMAVLEAEVAI.

The protein belongs to the cyclin family. In terms of assembly, interacts (via transcription activation domain) with host TAF9 in vitro. Interacts with host CDK3 and CDK8.

The protein localises to the host nucleus. Functionally, transforming protein which induces the development of dermal sarcomas. Induces positive and negative regulation of transcription from host and viral promoters by interacting with various cellular factors involved in protein transcription regulation. The chain is Retroviral cyclin (orfA) from Sander vitreus (Walleye).